Consider the following 378-residue polypeptide: Odorant receptor Or2 (378 aa).

Position 1 (Met-1) is a topological domain, cytoplasmic. A helical transmembrane segment spans residues 2-22; the sequence is LIEECPIIGVNVRVWLFWSYL. At 23-29 the chain is on the extracellular side; the sequence is RRPRLSR. A helical transmembrane segment spans residues 30-50; the sequence is FLVGCIPVAVLNVFQFLKLYS. The Cytoplasmic portion of the chain corresponds to 51 to 59; that stretch reads SWGDMSELI. A helical membrane pass occupies residues 60–80; sequence INGYFTVLYFNLVLRTSFLVI. The Extracellular segment spans residues 81-120; the sequence is NRRKFETFFEGVAAEYALLEKNDDIRPVLERYTRRGRMLS. A helical membrane pass occupies residues 121-141; the sequence is ISNLWLGAFISACFVTYPLFV. At 142-164 the chain is on the cytoplasmic side; the sequence is PGRGLPYGVTIPGVDVLATPTYQ. Residues 165–185 traverse the membrane as a helical segment; that stretch reads VVFVLQVYLTFPACCMYIPFT. Residues 186–254 lie on the Extracellular side of the membrane; sequence SFYATCTLFA…HDLNSLVTHL (69 aa). The chain crosses the membrane as a helical span at residues 255–275; sequence CLLEFLSFGMMLCALLFLLSI. Over 276–278 the chain is Cytoplasmic; that stretch reads SNQ. Residues 279–299 traverse the membrane as a helical segment; it reads LAQMIMIGSYIFMILSQMFAF. Residues 300 to 378 are Extracellular-facing; that stretch reads YWHANEVLEQ…YFTLLRRVYN (79 aa). N-linked (GlcNAc...) asparagine glycosylation occurs at Asn-364.

Belongs to the insect chemoreceptor superfamily. Heteromeric odorant receptor channel (TC 1.A.69) family. Or30a subfamily. Expressed in male and female antennae and maxillary palps.

The protein resides in the cell membrane. Odorant receptor which plays a critical role in the anthropophilic host-seeking behavior; establishes the host preference to transmit malaria. The polypeptide is Odorant receptor Or2 (OR2) (Anopheles gambiae (African malaria mosquito)).